A 408-amino-acid chain; its full sequence is Imidazolonepropionase (408 aa).

Residues His73 and His75 each contribute to the Fe(3+) site. Residues His73 and His75 each coordinate Zn(2+). The 4-imidazolone-5-propanoate site is built by Arg82, Tyr145, and His178. N-formimidoyl-L-glutamate is bound at residue Tyr145. A Fe(3+)-binding site is contributed by His243. A Zn(2+)-binding site is contributed by His243. A 4-imidazolone-5-propanoate-binding site is contributed by Gln246. Asp318 contributes to the Fe(3+) binding site. Asp318 serves as a coordination point for Zn(2+). 2 residues coordinate N-formimidoyl-L-glutamate: Asn320 and Gly322. Ser323 is a binding site for 4-imidazolone-5-propanoate.

It belongs to the metallo-dependent hydrolases superfamily. HutI family. It depends on Zn(2+) as a cofactor. Fe(3+) is required as a cofactor.

The protein localises to the cytoplasm. It catalyses the reaction 4-imidazolone-5-propanoate + H2O = N-formimidoyl-L-glutamate. It functions in the pathway amino-acid degradation; L-histidine degradation into L-glutamate; N-formimidoyl-L-glutamate from L-histidine: step 3/3. Catalyzes the hydrolytic cleavage of the carbon-nitrogen bond in imidazolone-5-propanoate to yield N-formimidoyl-L-glutamate. It is the third step in the universal histidine degradation pathway. The chain is Imidazolonepropionase from Shewanella baltica (strain OS155 / ATCC BAA-1091).